The sequence spans 737 residues: Zinc finger protein 585A (737 aa).

A KRAB domain is found at 1–65; the sequence is MAAPTREEWR…QGERPRQSCP (65 aa). 6 C2H2-type zinc fingers span residues 126 to 148, 154 to 176, 182 to 204, 210 to 232, 238 to 260, and 266 to 288; these read YVCI…QKTH, FKCN…QRIH, YECS…EKIH, HECT…QKIH, YICI…RRIH, and YECS…QRVH. The segment at 294-316 adopts a C2H2-type 7; degenerate zinc-finger fold; the sequence is YICTEYGKVFSNNSNLITHKKVQ. 15 consecutive C2H2-type zinc fingers follow at residues 322–344, 350–372, 378–400, 406–428, 434–456, 462–484, 490–512, 518–540, 546–568, 574–596, 602–624, 630–652, 658–680, 686–708, and 714–736; these read SICT…QRIH, YACS…QRIH, YICM…QIIH, YKCG…KRIH, YMCN…QKTH, YICS…QRIH, YECS…QKIH, YECH…QKIH, YVCT…QRIH, YECS…QPLH, YVCA…QKTH, YICS…HRIH, YECS…QRIH, YVCA…QTTH, and YKCG…QSNH.

This sequence belongs to the krueppel C2H2-type zinc-finger protein family.

The protein resides in the nucleus. In terms of biological role, may be involved in transcriptional regulation. The polypeptide is Zinc finger protein 585A (ZNF585A) (Pongo abelii (Sumatran orangutan)).